The sequence spans 551 residues: Electron transfer flavoprotein-ubiquinone oxidoreductase (551 aa).

10 to 24 (VVIVGAGPAGLSAAC) is an FAD binding site. [4Fe-4S] cluster is bound by residues C496, C520, C523, and C526. The 4Fe-4S ferredoxin-type domain occupies 511–540 (KRFQINAQNCVHCKTCDIKDPAQNITWVAP).

The protein belongs to the ETF-QO/FixC family. The cofactor is [4Fe-4S] cluster. Requires FAD as cofactor.

It catalyses the reaction a ubiquinone + reduced [electron-transfer flavoprotein] = a ubiquinol + oxidized [electron-transfer flavoprotein] + H(+). In terms of biological role, accepts electrons from ETF and reduces ubiquinone. The protein is Electron transfer flavoprotein-ubiquinone oxidoreductase of Pseudomonas aeruginosa (strain ATCC 15692 / DSM 22644 / CIP 104116 / JCM 14847 / LMG 12228 / 1C / PRS 101 / PAO1).